Consider the following 159-residue polypeptide: UPF0262 protein Dshi_0980 (159 aa).

This sequence belongs to the UPF0262 family.

In Dinoroseobacter shibae (strain DSM 16493 / NCIMB 14021 / DFL 12), this protein is UPF0262 protein Dshi_0980.